The following is a 263-amino-acid chain: Small ribosomal subunit protein eS4 (263 aa).

Residues 42–104 (LPLIIFLRNK…TGENFRLIYD (63 aa)) enclose the S4 RNA-binding domain. K230 participates in a covalent cross-link: Glycyl lysine isopeptide (Lys-Gly) (interchain with G-Cter in SUMO2). Position 233 is an N6-acetyllysine (K233).

It belongs to the eukaryotic ribosomal protein eS4 family. Component of the small ribosomal subunit. Part of the small subunit (SSU) processome, composed of more than 70 proteins and the RNA chaperone small nucleolar RNA (snoRNA) U3. Identified in a IGF2BP1-dependent mRNP granule complex containing untranslated mRNAs.

It is found in the cytoplasm. It localises to the nucleus. The protein localises to the nucleolus. Functionally, component of the small ribosomal subunit. The ribosome is a large ribonucleoprotein complex responsible for the synthesis of proteins in the cell. Part of the small subunit (SSU) processome, first precursor of the small eukaryotic ribosomal subunit. During the assembly of the SSU processome in the nucleolus, many ribosome biogenesis factors, an RNA chaperone and ribosomal proteins associate with the nascent pre-rRNA and work in concert to generate RNA folding, modifications, rearrangements and cleavage as well as targeted degradation of pre-ribosomal RNA by the RNA exosome. In Oryctolagus cuniculus (Rabbit), this protein is Small ribosomal subunit protein eS4 (RPS4X).